The following is a 204-amino-acid chain: UPF0056 membrane protein TC_0241 (204 aa).

The next 6 helical transmembrane spans lie at 8 to 28 (LTLLFYALFNSLGSLPVFVAL), 46 to 66 (IFALLTLILFITFGQGFFRLL), 68 to 88 (VSLPAFQLTGGILLGSLAINM), 107 to 127 (IFYPLAFPVITGPATITSTLG), 138 to 158 (LVLGAIMLAWAFSLITLFFSS), and 176 to 196 (FGISLALMAGNLMLKAISTAF).

The protein belongs to the UPF0056 (MarC) family.

It is found in the cell membrane. The polypeptide is UPF0056 membrane protein TC_0241 (Chlamydia muridarum (strain MoPn / Nigg)).